Consider the following 127-residue polypeptide: Holo-[acyl-carrier-protein] synthase (127 aa).

2 residues coordinate Mg(2+): D7 and E53.

Belongs to the P-Pant transferase superfamily. AcpS family. Requires Mg(2+) as cofactor.

It localises to the cytoplasm. It catalyses the reaction apo-[ACP] + CoA = holo-[ACP] + adenosine 3',5'-bisphosphate + H(+). Transfers the 4'-phosphopantetheine moiety from coenzyme A to a Ser of acyl-carrier-protein. The protein is Holo-[acyl-carrier-protein] synthase of Herpetosiphon aurantiacus (strain ATCC 23779 / DSM 785 / 114-95).